Here is a 360-residue protein sequence, read N- to C-terminus: Phosphoserine aminotransferase (360 aa).

Arginine 42 contributes to the L-glutamate binding site. Pyridoxal 5'-phosphate-binding positions include 76–77, tryptophan 102, threonine 152, aspartate 172, and glutamine 195; that span reads AS. Residue lysine 196 is modified to N6-(pyridoxal phosphate)lysine. 237–238 serves as a coordination point for pyridoxal 5'-phosphate; the sequence is NT.

The protein belongs to the class-V pyridoxal-phosphate-dependent aminotransferase family. SerC subfamily. As to quaternary structure, homodimer. Pyridoxal 5'-phosphate serves as cofactor.

Its subcellular location is the cytoplasm. It carries out the reaction O-phospho-L-serine + 2-oxoglutarate = 3-phosphooxypyruvate + L-glutamate. It catalyses the reaction 4-(phosphooxy)-L-threonine + 2-oxoglutarate = (R)-3-hydroxy-2-oxo-4-phosphooxybutanoate + L-glutamate. It functions in the pathway amino-acid biosynthesis; L-serine biosynthesis; L-serine from 3-phospho-D-glycerate: step 2/3. Functionally, catalyzes the reversible conversion of 3-phosphohydroxypyruvate to phosphoserine and of 3-hydroxy-2-oxo-4-phosphonooxybutanoate to phosphohydroxythreonine. In Bacillus cereus (strain ZK / E33L), this protein is Phosphoserine aminotransferase.